The primary structure comprises 228 residues: Aquaporin Z (228 aa).

The next 2 helical transmembrane spans lie at 1 to 21 (MLNK…GGCG) and 23 to 43 (AILA…ALAF). The short motif at 63-65 (NPA) is the NPA 1 element. 3 helical membrane passes run 82-102 (IPYW…LYVI), 129-149 (MMAG…IILG), and 154-174 (LAPA…IHLV). The NPA 2 signature appears at 184–186 (NPA). A helical membrane pass occupies residues 205–225 (LFWVAPLVGAVIGAIIWKGLL).

The protein belongs to the MIP/aquaporin (TC 1.A.8) family. In terms of assembly, homotetramer.

Its subcellular location is the cell inner membrane. The catalysed reaction is H2O(in) = H2O(out). Its function is as follows. Channel that permits osmotically driven movement of water in both directions. It is involved in the osmoregulation and in the maintenance of cell turgor during volume expansion in rapidly growing cells. It mediates rapid entry or exit of water in response to abrupt changes in osmolarity. The protein is Aquaporin Z of Brucella abortus biovar 1 (strain 9-941).